The primary structure comprises 436 residues: Trigger factor (436 aa).

Residues 161 to 248 (TDRVTIDLYG…LKKVEQYRLP (88 aa)) form the PPIase FKBP-type domain.

It belongs to the FKBP-type PPIase family. Tig subfamily.

The protein resides in the cytoplasm. The catalysed reaction is [protein]-peptidylproline (omega=180) = [protein]-peptidylproline (omega=0). Its function is as follows. Involved in protein export. Acts as a chaperone by maintaining the newly synthesized protein in an open conformation. Functions as a peptidyl-prolyl cis-trans isomerase. The sequence is that of Trigger factor from Baumannia cicadellinicola subsp. Homalodisca coagulata.